We begin with the raw amino-acid sequence, 337 residues long: MKLSRLALLSVFALASAPSWAESVVTVYSIDGLHDGDNSWYQVQFDAFTKATGITIRYVEGGGGVVVERLAKERTNPQADVLVTAPPFIQRAAAEKLLANFNTDAASAIPDANNLYSPLVKNYLSFIYNSKLLKTAPASWQDLLDGKFKNKLQYSTPGQAADGTAVMLQAFHSFGSKDASFAYLGKLQANNVGPSASTGKLTALVNKGEIYVANGDLQMNLAQMERNPNVKIFWPANDKGERSALAIPYVIGLVQGAPQSENGKKLINFLLSKEAQTRVSELSWGMPVRSDVTPSDEHYKAATAALEGVQSWQPNWDDVAVSLSADISRWHKVTESE.

The signal sequence occupies residues 1–21 (MKLSRLALLSVFALASAPSWA).

This sequence belongs to the bacterial solute-binding protein 1 family.

The protein resides in the periplasm. Its function is as follows. Probably part of the PhnSTUV complex (TC 3.A.1.11.5) involved in 2-aminoethylphosphonate import. This Salmonella typhi protein is Putative 2-aminoethylphosphonate-binding periplasmic protein (phnS).